Here is a 371-residue protein sequence, read N- to C-terminus: Cytoplasmic tRNA 2-thiolation protein 1 (371 aa).

It belongs to the TtcA family. CTU1/NCS6/ATPBD3 subfamily.

The protein localises to the cytoplasm. The protein operates within tRNA modification; 5-methoxycarbonylmethyl-2-thiouridine-tRNA biosynthesis. In terms of biological role, plays a central role in 2-thiolation of mcm(5)S(2)U at tRNA wobble positions of tRNA(Lys), tRNA(Glu) and tRNA(Gln). Directly binds tRNAs and probably acts by catalyzing adenylation of tRNAs, an intermediate required for 2-thiolation. It is unclear whether it acts as a sulfurtransferase that transfers sulfur from thiocarboxylated URM1 onto the uridine of tRNAs at wobble position. Prior mcm(5) tRNA modification by the elongator complex is required for 2-thiolation. May also be involved in protein urmylation. In Kluyveromyces lactis (strain ATCC 8585 / CBS 2359 / DSM 70799 / NBRC 1267 / NRRL Y-1140 / WM37) (Yeast), this protein is Cytoplasmic tRNA 2-thiolation protein 1.